Reading from the N-terminus, the 413-residue chain is Alpha-1-antitrypsin 1-4 (413 aa).

An N-terminal signal peptide occupies residues methionine 1 to alanine 24. 3 N-linked (GlcNAc...) asparagine glycosylation sites follow: asparagine 64, asparagine 101, and asparagine 265. The segment at alanine 368–histidine 387 is RCL.

Belongs to the serpin family.

Its subcellular location is the secreted. Inhibitor of serine proteases. Can inhibit trypsin and chymotrypsin; relatively ineffective against elastase. The polypeptide is Alpha-1-antitrypsin 1-4 (Serpina1d) (Mus musculus (Mouse)).